The sequence spans 182 residues: uncharacterized protein (182 aa).

The first 26 residues, 1 to 26 (MIRALCTIVLIAAGVAVALYLSLVYG), serve as a signal peptide directing secretion. A disordered region spans residues 68–90 (YTERPYPVSSTQSPTTTQSPTTT). Residues 74–90 (PVSSTQSPTTTQSPTTT) show a composition bias toward low complexity.

This is an uncharacterized protein from Dryophytes versicolor (chameleon treefrog).